The following is a 284-amino-acid chain: 2-dehydro-3-deoxyphosphooctonate aldolase (284 aa).

The protein belongs to the KdsA family.

It is found in the cytoplasm. The enzyme catalyses D-arabinose 5-phosphate + phosphoenolpyruvate + H2O = 3-deoxy-alpha-D-manno-2-octulosonate-8-phosphate + phosphate. It functions in the pathway carbohydrate biosynthesis; 3-deoxy-D-manno-octulosonate biosynthesis; 3-deoxy-D-manno-octulosonate from D-ribulose 5-phosphate: step 2/3. It participates in bacterial outer membrane biogenesis; lipopolysaccharide biosynthesis. In Salmonella arizonae (strain ATCC BAA-731 / CDC346-86 / RSK2980), this protein is 2-dehydro-3-deoxyphosphooctonate aldolase.